Consider the following 119-residue polypeptide: Large ribosomal subunit protein uL22 (119 aa).

It belongs to the universal ribosomal protein uL22 family. In terms of assembly, part of the 50S ribosomal subunit.

Its function is as follows. This protein binds specifically to 23S rRNA; its binding is stimulated by other ribosomal proteins, e.g. L4, L17, and L20. It is important during the early stages of 50S assembly. It makes multiple contacts with different domains of the 23S rRNA in the assembled 50S subunit and ribosome. The globular domain of the protein is located near the polypeptide exit tunnel on the outside of the subunit, while an extended beta-hairpin is found that lines the wall of the exit tunnel in the center of the 70S ribosome. This is Large ribosomal subunit protein uL22 from Chlorobium phaeobacteroides (strain DSM 266 / SMG 266 / 2430).